Here is a 354-residue protein sequence, read N- to C-terminus: C-C chemokine receptor type 5 (354 aa).

Residues 1 to 32 (MDFQGSVPTYSYDIDYGMSAPCQKINVKQIAA) are Extracellular-facing. Residue serine 6 is glycosylated (O-linked (GalNAc...) serine). Sulfotyrosine occurs at positions 10, 12, and 16. Intrachain disulfides connect cysteine 22–cysteine 271 and cysteine 103–cysteine 180. Residues 33-60 (QLLPPLYSLVFIFGFVGNMMVFLILISC) traverse the membrane as a helical segment. Topologically, residues 61-70 (KKLKSVTDIY) are cytoplasmic. Residues 71 to 91 (LLNLAISDLLFLLTLPFWAHY) traverse the membrane as a helical segment. Topologically, residues 92-104 (AANEWVFGNIMCK) are extracellular. Residues 105–126 (VFTGLYHIGYFGGIFFIILLTI) traverse the membrane as a helical segment. The Cytoplasmic portion of the chain corresponds to 127–143 (DRYLAIVHAVFALKVRT). The helical transmembrane segment at 144-168 (VNFGVITSVVTWAVAVFASLPEIIF) threads the bilayer. The Extracellular portion of the chain corresponds to 169 to 200 (TRSQKEGFHYTCSPHFPHTQYHFWKSFQTLKM). The chain crosses the membrane as a helical span at residues 201 to 220 (VILSLILPLLVMVICYSGIL). At 221 to 237 (HTLFRCRNEKKRHRAVR) the chain is on the cytoplasmic side. The chain crosses the membrane as a helical span at residues 238-262 (LIFAIMIVYFLFWTPYNIVLLLTTF). Residues 263-279 (QEFFGLNNCSSSNRLDQ) are Extracellular-facing. A helical membrane pass occupies residues 280-303 (AMQATETLGMTHCCLNPVIYAFVG). Topologically, residues 304–354 (EKFRSYLSVFFRKHMVKRFCKRCSIFQQDNPDRASSVYTRSTGEHEVSTGL) are cytoplasmic. 2 S-palmitoyl cysteine lipidation sites follow: cysteine 323 and cysteine 326. A phosphoserine; by BARK1 mark is found at serine 338, serine 339, serine 344, and serine 351.

It belongs to the G-protein coupled receptor 1 family. In terms of assembly, interacts with PRAF2. Efficient ligand binding to CCL3/MIP-1alpha and CCL4/MIP-1beta requires sulfation, O-glycosylation and sialic acid modifications. Glycosylation on Ser-6 is required for efficient binding of CCL4. Interacts with GRK2. Interacts with ARRB1 and ARRB2. Interacts with CNIH4. Interacts with S100A4; this interaction stimulates T-lymphocyte chemotaxis. Sulfated on at least 2 of the N-terminal tyrosines. Sulfation is required for efficient binding of the chemokines, CCL3 and CCL4. In terms of processing, O-glycosylated, but not N-glycosylated. Ser-6 appears to be the major site. Also sialylated glycans present which contribute to chemokine binding. Post-translationally, palmitoylation in the C-terminal is important for cell surface expression. Phosphorylation on serine residues in the C-terminal is stimulated by binding CC chemokines especially by APO-RANTES.

Its subcellular location is the cell membrane. Functionally, receptor for a number of inflammatory CC-chemokines including CCL3/MIP-1-alpha, CCL4/MIP-1-beta and RANTES and subsequently transduces a signal by increasing the intracellular calcium ion level. May play a role in the control of granulocytic lineage proliferation or differentiation. Participates in T-lymphocyte migration to the infection site by acting as a chemotactic receptor. The protein is C-C chemokine receptor type 5 (Ccr5) of Mus musculus (Mouse).